A 458-amino-acid chain; its full sequence is UDP-N-acetylmuramoylalanine--D-glutamate ligase (458 aa).

119–125 (GSNGKTT) lines the ATP pocket.

The protein belongs to the MurCDEF family.

The protein localises to the cytoplasm. The catalysed reaction is UDP-N-acetyl-alpha-D-muramoyl-L-alanine + D-glutamate + ATP = UDP-N-acetyl-alpha-D-muramoyl-L-alanyl-D-glutamate + ADP + phosphate + H(+). Its pathway is cell wall biogenesis; peptidoglycan biosynthesis. In terms of biological role, cell wall formation. Catalyzes the addition of glutamate to the nucleotide precursor UDP-N-acetylmuramoyl-L-alanine (UMA). In Limosilactobacillus fermentum (strain NBRC 3956 / LMG 18251) (Lactobacillus fermentum), this protein is UDP-N-acetylmuramoylalanine--D-glutamate ligase.